Consider the following 347-residue polypeptide: GMP reductase (347 aa).

108–131 serves as a coordination point for NADP(+); sequence ADFQKTKDVMALSDELIFICIDIA. 2 residues coordinate K(+): glycine 181 and glycine 183. The active-site Thioimidate intermediate is cysteine 186. 216 to 239 provides a ligand contact to NADP(+); it reads IIGDGGCTCPGDVAKAFGGGADFV.

Belongs to the IMPDH/GMPR family. GuaC type 1 subfamily. Homotetramer.

It carries out the reaction IMP + NH4(+) + NADP(+) = GMP + NADPH + 2 H(+). Its function is as follows. Catalyzes the irreversible NADPH-dependent deamination of GMP to IMP. It functions in the conversion of nucleobase, nucleoside and nucleotide derivatives of G to A nucleotides, and in maintaining the intracellular balance of A and G nucleotides. This is GMP reductase from Vibrio cholerae serotype O1 (strain ATCC 39541 / Classical Ogawa 395 / O395).